Consider the following 544-residue polypeptide: GMP synthase [glutamine-hydrolyzing] (544 aa).

The Glutamine amidotransferase type-1 domain maps to 12 to 210 (TILILDFGSQ…VKNVCGVRDG (199 aa)). Cys-88 functions as the Nucleophile in the catalytic mechanism. Catalysis depends on residues His-184 and Glu-186. The 209-residue stretch at 211 to 419 (WSMESFIPKE…LNIPEHLVGR (209 aa)) folds into the GMPS ATP-PPase domain. 239–245 (SGGVDST) contributes to the ATP binding site. XMP contacts are provided by Arg-312, Asp-481, Lys-536, and Glu-542.

In terms of assembly, homodimer. Also forms a small population of homotetramers. It depends on Mg(2+) as a cofactor.

Its subcellular location is the cytoplasm. It localises to the cytosol. The catalysed reaction is XMP + L-glutamine + ATP + H2O = GMP + L-glutamate + AMP + diphosphate + 2 H(+). It participates in purine metabolism; GMP biosynthesis; GMP from XMP (L-Gln route): step 1/1. The enzyme is inhibited by ECC1385; although this compound fails to inhibit growth of the organism. Catalyzes the conversion of xanthine monophosphate (XMP) to GMP in the presence of glutamine and ATP through an adenyl-XMP intermediate. The protein is GMP synthase [glutamine-hydrolyzing] of Cryptococcus neoformans var. grubii serotype A (strain H99 / ATCC 208821 / CBS 10515 / FGSC 9487) (Filobasidiella neoformans var. grubii).